The chain runs to 538 residues: Chaperonin GroEL 1 (538 aa).

ATP-binding positions include 29–32 (TLGP), 86–90 (DGTTT), Gly-413, 478–480 (NAA), and Asp-494.

It belongs to the chaperonin (HSP60) family. As to quaternary structure, forms a cylinder of 14 subunits composed of two heptameric rings stacked back-to-back. Interacts with the co-chaperonin GroES.

It localises to the cytoplasm. The enzyme catalyses ATP + H2O + a folded polypeptide = ADP + phosphate + an unfolded polypeptide.. Its function is as follows. Together with its co-chaperonin GroES, plays an essential role in assisting protein folding. The GroEL-GroES system forms a nano-cage that allows encapsulation of the non-native substrate proteins and provides a physical environment optimized to promote and accelerate protein folding. The polypeptide is Chaperonin GroEL 1 (Corynebacterium glutamicum (strain ATCC 13032 / DSM 20300 / JCM 1318 / BCRC 11384 / CCUG 27702 / LMG 3730 / NBRC 12168 / NCIMB 10025 / NRRL B-2784 / 534)).